We begin with the raw amino-acid sequence, 213 residues long: Glycerol-3-phosphate acyltransferase (213 aa).

6 helical membrane-spanning segments follow: residues 3–23 (ILLL…LWIG), 54–76 (TITF…WLGI), 83–100 (IIGF…FTGF), 110–130 (AGVL…VFAL), 142–162 (SITA…IHFL), and 163–183 (LDGY…VIIF).

It belongs to the PlsY family. As to quaternary structure, probably interacts with PlsX.

It is found in the cell membrane. The enzyme catalyses an acyl phosphate + sn-glycerol 3-phosphate = a 1-acyl-sn-glycero-3-phosphate + phosphate. It participates in lipid metabolism; phospholipid metabolism. In terms of biological role, catalyzes the transfer of an acyl group from acyl-phosphate (acyl-PO(4)) to glycerol-3-phosphate (G3P) to form lysophosphatidic acid (LPA). This enzyme utilizes acyl-phosphate as fatty acyl donor, but not acyl-CoA or acyl-ACP. This is Glycerol-3-phosphate acyltransferase from Streptococcus thermophilus (strain ATCC BAA-491 / LMD-9).